Here is a 338-residue protein sequence, read N- to C-terminus: Ketol-acid reductoisomerase (NADP(+)) (338 aa).

A KARI N-terminal Rossmann domain is found at 1-181; sequence MQIFYDKDCD…GGGRTGIIET (181 aa). NADP(+) contacts are provided by residues 24-27, Arg-47, Ser-50, Ser-52, and 82-85; these read YGSQ and DEFQ. Residue His-107 is part of the active site. Gly-133 contributes to the NADP(+) binding site. Residues 182-327 form the KARI C-terminal knotted domain; the sequence is SFREETETDL…AKLRAMMPWI (146 aa). Positions 190, 194, 226, and 230 each coordinate Mg(2+). Ser-251 lines the substrate pocket.

This sequence belongs to the ketol-acid reductoisomerase family. Requires Mg(2+) as cofactor.

It catalyses the reaction (2R)-2,3-dihydroxy-3-methylbutanoate + NADP(+) = (2S)-2-acetolactate + NADPH + H(+). It carries out the reaction (2R,3R)-2,3-dihydroxy-3-methylpentanoate + NADP(+) = (S)-2-ethyl-2-hydroxy-3-oxobutanoate + NADPH + H(+). It participates in amino-acid biosynthesis; L-isoleucine biosynthesis; L-isoleucine from 2-oxobutanoate: step 2/4. The protein operates within amino-acid biosynthesis; L-valine biosynthesis; L-valine from pyruvate: step 2/4. Involved in the biosynthesis of branched-chain amino acids (BCAA). Catalyzes an alkyl-migration followed by a ketol-acid reduction of (S)-2-acetolactate (S2AL) to yield (R)-2,3-dihydroxy-isovalerate. In the isomerase reaction, S2AL is rearranged via a Mg-dependent methyl migration to produce 3-hydroxy-3-methyl-2-ketobutyrate (HMKB). In the reductase reaction, this 2-ketoacid undergoes a metal-dependent reduction by NADPH to yield (R)-2,3-dihydroxy-isovalerate. The chain is Ketol-acid reductoisomerase (NADP(+)) from Acinetobacter baumannii (strain AB0057).